The sequence spans 280 residues: 2-dehydro-3-deoxyphosphooctonate aldolase (280 aa).

The protein belongs to the KdsA family.

It localises to the cytoplasm. The enzyme catalyses D-arabinose 5-phosphate + phosphoenolpyruvate + H2O = 3-deoxy-alpha-D-manno-2-octulosonate-8-phosphate + phosphate. Its pathway is carbohydrate biosynthesis; 3-deoxy-D-manno-octulosonate biosynthesis; 3-deoxy-D-manno-octulosonate from D-ribulose 5-phosphate: step 2/3. It functions in the pathway bacterial outer membrane biogenesis; lipopolysaccharide biosynthesis. In Pseudomonas putida (strain W619), this protein is 2-dehydro-3-deoxyphosphooctonate aldolase.